Reading from the N-terminus, the 175-residue chain is Crossover junction endodeoxyribonuclease RuvC (175 aa).

Residues Asp-12, Glu-72, and Asp-144 contribute to the active site. Mg(2+) is bound by residues Asp-12, Glu-72, and Asp-144.

Belongs to the RuvC family. In terms of assembly, homodimer which binds Holliday junction (HJ) DNA. The HJ becomes 2-fold symmetrical on binding to RuvC with unstacked arms; it has a different conformation from HJ DNA in complex with RuvA. In the full resolvosome a probable DNA-RuvA(4)-RuvB(12)-RuvC(2) complex forms which resolves the HJ. It depends on Mg(2+) as a cofactor.

It localises to the cytoplasm. The catalysed reaction is Endonucleolytic cleavage at a junction such as a reciprocal single-stranded crossover between two homologous DNA duplexes (Holliday junction).. Its function is as follows. The RuvA-RuvB-RuvC complex processes Holliday junction (HJ) DNA during genetic recombination and DNA repair. Endonuclease that resolves HJ intermediates. Cleaves cruciform DNA by making single-stranded nicks across the HJ at symmetrical positions within the homologous arms, yielding a 5'-phosphate and a 3'-hydroxyl group; requires a central core of homology in the junction. The consensus cleavage sequence is 5'-(A/T)TT(C/G)-3'. Cleavage occurs on the 3'-side of the TT dinucleotide at the point of strand exchange. HJ branch migration catalyzed by RuvA-RuvB allows RuvC to scan DNA until it finds its consensus sequence, where it cleaves and resolves the cruciform DNA. The chain is Crossover junction endodeoxyribonuclease RuvC from Beijerinckia indica subsp. indica (strain ATCC 9039 / DSM 1715 / NCIMB 8712).